The primary structure comprises 625 residues: Beta-galactosidase large subunit (625 aa).

The active-site Proton donor is glutamate 465. Residue glutamate 533 is the Nucleophile of the active site.

It belongs to the glycosyl hydrolase 2 family. As to quaternary structure, heterodimer of a large (LacL) and a small subunit (LacM).

The catalysed reaction is Hydrolysis of terminal non-reducing beta-D-galactose residues in beta-D-galactosides.. Component of a beta-galactosidase. The sequence is that of Beta-galactosidase large subunit from Latilactobacillus sakei (Lactobacillus sakei).